The following is a 246-amino-acid chain: Granzyme H (246 aa).

Residues 1 to 18 (MQPFLLLLAFLLTPGAGT) form the signal peptide. A propeptide spans 19-20 (EE) (activation peptide). One can recognise a Peptidase S1 domain in the interval 21 to 244 (IIGGHEAKPH…FLPWIKRTMK (224 aa)). The interval 46-48 (RKR) is mediates the preference for acidic residues at the P3' and P4' sites. A disulfide bridge connects residues cysteine 49 and cysteine 65. Histidine 64 serves as the catalytic Charge relay system. Residues asparagine 71 and asparagine 104 are each glycosylated (N-linked (GlcNAc...) asparagine). The active-site Charge relay system is aspartate 108. 2 cysteine pairs are disulfide-bonded: cysteine 142–cysteine 208 and cysteine 172–cysteine 187. Asparagine 179 carries an N-linked (GlcNAc...) asparagine glycan. The Charge relay system role is filled by serine 202.

Belongs to the peptidase S1 family. Granzyme subfamily. As to expression, constitutively expressed in NK cells.

Its subcellular location is the cytolytic granule. Inhibited by SERPINB1. Functionally, cytotoxic chymotrypsin-like serine protease with preference for bulky and aromatic residues at the P1 position and acidic residues at the P3' and P4' sites. Probably necessary for target cell lysis in cell-mediated immune responses. Participates in the antiviral response via direct cleavage of several proteins essential for viral replication. In Homo sapiens (Human), this protein is Granzyme H (GZMH).